Reading from the N-terminus, the 336-residue chain is Coproporphyrin III ferrochelatase (336 aa).

Positions 52 and 116 each coordinate Fe-coproporphyrin III. The Fe(2+) site is built by His176 and Glu259.

The protein belongs to the ferrochelatase family.

Its subcellular location is the cytoplasm. The enzyme catalyses Fe-coproporphyrin III + 2 H(+) = coproporphyrin III + Fe(2+). It participates in porphyrin-containing compound metabolism; protoheme biosynthesis. Involved in coproporphyrin-dependent heme b biosynthesis. Catalyzes the insertion of ferrous iron into coproporphyrin III to form Fe-coproporphyrin III. The polypeptide is Coproporphyrin III ferrochelatase (Mycobacterium leprae (strain Br4923)).